The following is a 1762-amino-acid chain: Kinase D-interacting substrate of 220 kDa (1762 aa).

Topologically, residues 1–508 are cytoplasmic; sequence MSVLISQSVI…WLIVFLTLLL (508 aa). 11 ANK repeats span residues 45–74, 78–107, 111–140, 145–174, 178–207, 211–240, 244–273, 277–306, 310–339, 343–372, and 376–405; these read AAEQ…NWTA, ASKE…GWTA, ACYK…SVYP, AGRG…TTPL, ARKG…MTAL, VKGG…NTAL, SKEG…DTVL, VRGG…KTAL, VEKG…ETPL, TKMR…DTPL, and IRGR…KAGE. The region spanning 440-953 is the KAP NTPase domain; it reads YDLYSSALAD…NIVSVTGRLL (514 aa). A helical transmembrane segment spans residues 509-529; the sequence is CGGLGLVFAFTVDTNLAIAIS. The Extracellular segment spans residues 530–533; it reads LSFL. Residues 534–554 form a helical membrane-spanning segment; the sequence is ALIYIFFIVIYFGGRREGESW. The Cytoplasmic portion of the chain corresponds to 555–668; that stretch reads NWAWALSTRL…SFVIFLFIVG (114 aa). A helical transmembrane segment spans residues 669-689; that stretch reads CIIAGITLLAIFRVDPKHLTV. Residues 690 to 696 are Extracellular-facing; the sequence is NAILISI. A helical membrane pass occupies residues 697-717; the sequence is ASVVGLAFVLNCRTWWQVLDS. The Cytoplasmic portion of the chain corresponds to 718-1680; it reads LLNSQRKRLH…TPSTVTLNNN (963 aa). Phosphoserine is present on residues Ser882 and Ser885. Thr914 carries the phosphothreonine modification. Ser918 carries the post-translational modification Phosphoserine; by PKD. Residues 1089–1092 form a mediates interaction with CRKL region; that stretch reads PRPP. Phosphoserine is present on residues Ser1163, Ser1288, Ser1344, Ser1351, Ser1353, Ser1354, and Ser1357. Disordered stretches follow at residues 1279–1305, 1336–1358, 1390–1440, and 1452–1556; these read DPRF…HTEL, RHSN…LNSQ, EGGT…DGRK, and YSSS…EPIR. The span at 1338–1350 shows a compositional bias: polar residues; that stretch reads SNLSWQSQTRRTP. The span at 1395-1422 shows a compositional bias: low complexity; that stretch reads SSTISGRSSPHSTYYIGQSSSGGSIHST. Basic and acidic residues predominate over residues 1423 to 1440; the sequence is LEQERGKEGELKQEDGRK. A compositionally biased stretch (polar residues) spans 1452 to 1462; the sequence is YSSSGVSTNEA. 4 positions are modified to phosphoserine: Ser1513, Ser1518, Ser1547, and Ser1566. The span at 1514-1524 shows a compositional bias: acidic residues; it reads DEDESGTEESD. Residues 1529–1553 are compositionally biased toward basic and acidic residues; it reads LKDDKDKKAEGKAERVCKSPEHSAE. The segment at 1571-1628 is disordered; it reads DKKDSSDSGVRSNESSPNHSLHNEAADDSQLEKANLIELEDEGHSGKRGMPHSLSGLQ. The span at 1579 to 1590 shows a compositional bias: polar residues; it reads GVRSNESSPNHS. Phosphoserine occurs at positions 1615 and 1625. Thr1671 bears the Phosphothreonine mark. Ser1673 is modified (phosphoserine). Thr1676 is subject to Phosphothreonine. The tract at residues 1704 to 1762 is disordered; the sequence is ILRPGPSPNPTAVQNENLKSMAHKRSQRSSYTRLSKDASELHAASSESTGFGEERESIL. The PDZ-binding motif lies at 1757–1762; that stretch reads ERESIL.

Found in a complex, at least composed of KIDINS220, MAGI2, NTRK1 and RAPGEF2; the complex is mainly formed at late endosomes in a nerve growth factor (NGF)-dependent manner. Interacts with RAPGEF2; the interaction is strengthened after NGF stimulation. Isoform 2 interacts (via C-terminal domain) with MAGI2 isoform 1 (via PDZ domain). Interacts with NTRK1, NTRK2, NTRK3, ERKL and NGFR. Can form a ternary complex with NGFR and NTRK1 and this complex is affected by the expression levels of KIDINS220/ARMS. An increase in KIDINS220/ARMS expression leads to a decreased association of NGFR and NTRK1. Interacts (via PDZ-binding motif) with SNTA1 and SNTB2 (via PDZ domains). Interacts with EPHA4 and PRKD1. In terms of processing, tyrosine phosphorylated by NTRK1, NTRK2, EPHB2 and EPHA4. Phosphorylation at Ser-918 is induced by phorbol ester treatment. Phosphorylation by NTRK2 is induced by brain-derived neurotrophic factor (BDNF) and neurotrophin-4/5. Phosphorylation by NTRK1 is induced by nerve growth factor (NGF). In terms of tissue distribution, expressed in developing nervous system and in highly plastic areas of the adult brain. Also expressed in neuroendocrine cells, where it concentrates at the tip of neurites. Expressed in developing muscle and is concentrated at the neuromuscular junction (NMS). SNTA1 can regulate its localization in the NMS.

The protein resides in the membrane. It localises to the late endosome. Promotes a prolonged MAP-kinase signaling by neurotrophins through activation of a Rap1-dependent mechanism. Provides a docking site for the CRKL-C3G complex, resulting in Rap1-dependent sustained ERK activation. May play an important role in regulating postsynaptic signal transduction through the syntrophin-mediated localization of receptor tyrosine kinases such as EPHA4. In cooperation with SNTA1 can enhance EPHA4-induced JAK/STAT activation. Plays a role in nerve growth factor (NGF)-induced recruitment of RAPGEF2 to late endosomes and neurite outgrowth. May play a role in neurotrophin- and ephrin-mediated neuronal outgrowth and in axon guidance during neural development and in neuronal regeneration. This chain is Kinase D-interacting substrate of 220 kDa (Kidins220), found in Rattus norvegicus (Rat).